The following is a 76-amino-acid chain: Esculentin-2MT2 (76 aa).

A signal peptide spans 1 to 22 (MFTLKKSMLLLFFLGTISLSLC). Residues 23-37 (EEERSADEDDGEKEV) constitute a propeptide, removed in mature form. Cys-70 and Cys-76 form a disulfide bridge.

This sequence belongs to the frog skin active peptide (FSAP) family. Esculentin subfamily. As to expression, expressed by the skin glands.

The protein resides in the secreted. Functionally, antimicrobial peptide. Active against a variety of Gram-negative and Gram-positive bacterial strains. Active against fungi. Shows strong hemolytic activity against human erythrocytes. This Amolops mantzorum (Sichuan torrent frog) protein is Esculentin-2MT2.